Here is a 201-residue protein sequence, read N- to C-terminus: Probable nicotinate-nucleotide adenylyltransferase (201 aa).

This sequence belongs to the NadD family.

The enzyme catalyses nicotinate beta-D-ribonucleotide + ATP + H(+) = deamido-NAD(+) + diphosphate. Its pathway is cofactor biosynthesis; NAD(+) biosynthesis; deamido-NAD(+) from nicotinate D-ribonucleotide: step 1/1. Catalyzes the reversible adenylation of nicotinate mononucleotide (NaMN) to nicotinic acid adenine dinucleotide (NaAD). The sequence is that of Probable nicotinate-nucleotide adenylyltransferase from Neisseria meningitidis serogroup C / serotype 2a (strain ATCC 700532 / DSM 15464 / FAM18).